Here is a 120-residue protein sequence, read N- to C-terminus: MDQLIQLVEASEARNDFPAINPGDTVKIQLKVIEGEKERLQAFEGVVISDRGAGGSKTITVRKISHGVGVERIIPVNSPNIESITVLKHGKARRAKLFYLRKRTGKAALKVKARKVVEKA.

This sequence belongs to the bacterial ribosomal protein bL19 family.

Its function is as follows. This protein is located at the 30S-50S ribosomal subunit interface and may play a role in the structure and function of the aminoacyl-tRNA binding site. The sequence is that of Large ribosomal subunit protein bL19 from Chlorobium phaeobacteroides (strain DSM 266 / SMG 266 / 2430).